Reading from the N-terminus, the 193-residue chain is MAAEPVEDNCINFVAMKFIDNTLYFIAEDDENLESDYFGKLESKLSVIRNLNDQVLFIDQGNRPLFEDMTDSDCRDNAPRTIFIISMYKDSQPRGMAVTISVKCEKISTLSCENKIISFKEMNPPDNIKDTKSDIIFFQRSVPGHDNKMQFESSSYEGYFLACEKERDLFKLILKKEDELGDRSIMFTVQNED.

Residues 1-36 (MAAEPVEDNCINFVAMKFIDNTLYFIAEDDENLESD) constitute a propeptide that is removed on maturation.

The protein belongs to the IL-1 family. In terms of assembly, forms a ternary complex with ligand-binding receptor subunit IL18R1 and signaling receptor subunit IL18RAP at the plasma membrane. Mature IL18 first binds to IL18R1 forming a low affinity binary complex, which then interacts with IL18RAP to form a high affinity ternary complex that signals inside the cell. Interacts with cargo receptor TMED10; the interaction mediates the translocation from the cytoplasm into the ERGIC (endoplasmic reticulum-Golgi intermediate compartment) and thereby secretion. In terms of processing, the pro-IL-18 precursor is processed by CASP1, CASP4 or CASP5 to yield its mature, active form. The pro-IL-18 precursor features autoinhibitory interactions between the propeptide and the post-cleavage-site region, preventing recognition by the IL18R1 receptor. Processing by CASP1, CASP4 or CASP5 induces conformational changes to generate critical receptor-binding sites. The mature form is then secreted and released in the extracellular milieu by passing through the gasdermin-D (GSDMD) pore. In contrast, cleavage by CASP3 inactivates IL18. Expressed in ovarian carcinoma but undetectable in normal ovarian epithelial cells. Resistant to proteolytic activation by caspase-1 and -4.

It localises to the cytoplasm. It is found in the cytosol. The protein resides in the secreted. Its function is as follows. Pro-inflammatory cytokine primarily involved in epithelial barrier repair, polarized T-helper 1 (Th1) cell and natural killer (NK) cell immune responses. Upon binding to IL18R1 and IL18RAP, forms a signaling ternary complex which activates NF-kappa-B, triggering synthesis of inflammatory mediators. Synergizes with IL12/interleukin-12 to induce IFNG synthesis from T-helper 1 (Th1) cells and natural killer (NK) cells. Involved in transduction of inflammation downstream of pyroptosis: its mature form is specifically released in the extracellular milieu by passing through the gasdermin-D (GSDMD) pore. This is Interleukin-18 from Homo sapiens (Human).